The chain runs to 172 residues: Adenine phosphoribosyltransferase (172 aa).

The protein belongs to the purine/pyrimidine phosphoribosyltransferase family. In terms of assembly, homodimer.

The protein resides in the cytoplasm. It catalyses the reaction AMP + diphosphate = 5-phospho-alpha-D-ribose 1-diphosphate + adenine. Its pathway is purine metabolism; AMP biosynthesis via salvage pathway; AMP from adenine: step 1/1. Its function is as follows. Catalyzes a salvage reaction resulting in the formation of AMP, that is energically less costly than de novo synthesis. The chain is Adenine phosphoribosyltransferase from Staphylococcus saprophyticus subsp. saprophyticus (strain ATCC 15305 / DSM 20229 / NCIMB 8711 / NCTC 7292 / S-41).